The following is a 117-amino-acid chain: Large ribosomal subunit protein bL19 (117 aa).

This sequence belongs to the bacterial ribosomal protein bL19 family.

Its function is as follows. This protein is located at the 30S-50S ribosomal subunit interface and may play a role in the structure and function of the aminoacyl-tRNA binding site. The chain is Large ribosomal subunit protein bL19 from Methylibium petroleiphilum (strain ATCC BAA-1232 / LMG 22953 / PM1).